The primary structure comprises 69 residues: MKTQFAILMITVVLMQMLVQTEGGILGKLWEGVKSIFGKRGLKNLDQLDDSFDSDLSDADVKLLREMFK.

The signal sequence occupies residues 1–23 (MKTQFAILMITVVLMQMLVQTEG). At Phe37 the chain carries Phenylalanine amide. Residues 41 to 69 (GLKNLDQLDDSFDSDLSDADVKLLREMFK) constitute a propeptide that is removed on maturation.

The protein belongs to the non-disulfide-bridged peptide (NDBP) superfamily. Short antimicrobial peptide (group 4) family. In terms of tissue distribution, expressed by the venom gland.

The protein resides in the secreted. The protein localises to the target cell membrane. With respect to regulation, antibacterial activity is decreased by serum. Functionally, antimicrobial peptide that acts by inducing concentration-dependent membrane disruption, implying a membrane-lytic mode of action. Acts with potent activity against Gram-positive bacteria (MIC=4.04-16.16 uM) including methicillin-resistant S.aureus (MRSA). Its activity on Gram-negative bacteria is controversial. Li and colleagues (2014) describe no activity towards E.coli and P.aeruginosa, while Kim and colleagues (2018) describe a potent activity towards P.aeruginosa (MIC=3.13-12.5 uM), and Luo and colleagues (2021) describe a potent activity against antibiotic-sensitive and -resistant Acinetobacter baumannii strains (MIC=3.2-10 uM). On S.aureus, possibly acts by impairing an unknown intracellular target and/or by interacting with the membrane, leading to the lateral expansion of the membrane area at high MIC concentrations, resulting in the formation of mesosome-like structures that leads to cell lysis. Shows moderate inhibition of P.aeruginosa biofilm formation. Administration of this peptide at sub-MIC concentrations in multiple treatments does not lead to resistance in S.aureus. Exhibits low toxicity and hemolytic activity against mammalian cell lines and BALB/c mice. In vivo, improves the survival rate of the MRSA infected BALB/c mice in the peritonitis model. In Heterometrus petersii (Asian forest scorpion), this protein is Amphipathic peptide Hp1404.